The chain runs to 757 residues: Myb-related protein A (757 aa).

HTH myb-type domains follow at residues 30–81 (KKIC…QKVL), 82–137 (NPEL…NPEV), and 138–188 (KKSS…RRKV). 3 DNA-binding regions (H-T-H motif) span residues 58 to 81 (WAFI…QKVL), 110 to 133 (WSLI…HNHL), and 161 to 184 (WAEI…NSTM). Residues 187–209 (KVEQEGYLQDGTKSSSERTGSST) form a disordered region. A compositionally biased stretch (polar residues) spans 197–209 (GTKSSSERTGSST). The interval 235–300 (IPVYQYASPE…RLSSQAGSLP (66 aa)) is transcriptional activation domain. The interval 303–558 (SGSFVMEDCV…IRRSLLGSTP (256 aa)) is negative regulatory domain.

In terms of assembly, component of the DREAM complex. As to expression, expressed ubiquitously.

It localises to the nucleus. Functionally, strong transcriptional activator; DNA-binding protein that specifically recognize the sequence 5'-YAAC[GT]G-3'. Could have a role in the proliferation and/or differentiation of neurogenic, spermatogenic and B-lymphoid cells. This chain is Myb-related protein A (MYBL1), found in Gallus gallus (Chicken).